Reading from the N-terminus, the 207-residue chain is Proteasome subunit beta (207 aa).

Positions 1-7 (MVEAFKG) are cleaved as a propeptide — removed in mature form; by autocatalysis. Residue threonine 8 is the Nucleophile of the active site.

Belongs to the peptidase T1B family. As to quaternary structure, the 20S proteasome core is composed of 14 alpha and 14 beta subunits that assemble into four stacked heptameric rings, resulting in a barrel-shaped structure. The two inner rings, each composed of seven catalytic beta subunits, are sandwiched by two outer rings, each composed of seven alpha subunits. The catalytic chamber with the active sites is on the inside of the barrel. Has a gated structure, the ends of the cylinder being occluded by the N-termini of the alpha-subunits. Is capped at one or both ends by the proteasome regulatory ATPase, PAN.

It is found in the cytoplasm. The catalysed reaction is Cleavage of peptide bonds with very broad specificity.. Its activity is regulated as follows. The formation of the proteasomal ATPase PAN-20S proteasome complex, via the docking of the C-termini of PAN into the intersubunit pockets in the alpha-rings, triggers opening of the gate for substrate entry. Interconversion between the open-gate and close-gate conformations leads to a dynamic regulation of the 20S proteasome proteolysis activity. Its function is as follows. Component of the proteasome core, a large protease complex with broad specificity involved in protein degradation. This chain is Proteasome subunit beta, found in Methanothrix thermoacetophila (strain DSM 6194 / JCM 14653 / NBRC 101360 / PT) (Methanosaeta thermophila).